A 561-amino-acid polypeptide reads, in one-letter code: Chaperonin GroEL 1 (561 aa).

ATP is bound by residues 29–32, 86–90, Gly413, and Asp495; these read TMGP and DGTTT.

This sequence belongs to the chaperonin (HSP60) family. In terms of assembly, forms a cylinder of 14 subunits composed of two heptameric rings stacked back-to-back. Interacts with the co-chaperonin GroES.

Its subcellular location is the cytoplasm. The enzyme catalyses ATP + H2O + a folded polypeptide = ADP + phosphate + an unfolded polypeptide.. Together with its co-chaperonin GroES, plays an essential role in assisting protein folding. The GroEL-GroES system forms a nano-cage that allows encapsulation of the non-native substrate proteins and provides a physical environment optimized to promote and accelerate protein folding. This chain is Chaperonin GroEL 1, found in Trichodesmium erythraeum (strain IMS101).